We begin with the raw amino-acid sequence, 473 residues long: Cytochrome P450 716A2 (473 aa).

A helical transmembrane segment spans residues 1–21 (MYLTIIFLFISSIIFPLLFFL). Position 420 (C420) interacts with heme.

The protein belongs to the cytochrome P450 family. The cofactor is heme.

It localises to the membrane. Its function is as follows. Possesses triterpene oxidizing activity. Catalyzes the C28 hydroxylation of alpha-amyrin, beta-amyrin, and lupeol, producing uvaol, erythrodiol, and betulin, respectively. Catalyzes the C28 carboxylation of alpha- and beta-amyrin. Possesses 22alpha-hydroxylation activity against alpha- and beta-amaryn. The polypeptide is Cytochrome P450 716A2 (Arabidopsis thaliana (Mouse-ear cress)).